We begin with the raw amino-acid sequence, 1192 residues long: Integrator complex subunit 2 (1192 aa).

The chain crosses the membrane as a helical span at residues 420–436 (FVSLSFCMLLAFSTLVS).

The protein belongs to the Integrator subunit 2 family. In terms of assembly, component of the Integrator complex, composed of core subunits INTS1, INTS2, INTS3, INTS4, INTS5, INTS6, INTS7, INTS8, INTS9/RC74, INTS10, INTS11/CPSF3L, INTS12, INTS13, INTS14 and INTS15. The core complex associates with protein phosphatase 2A subunits PPP2CA and PPP2R1A, to form the Integrator-PP2A (INTAC) complex.

The protein resides in the nucleus. It is found in the nucleus membrane. The protein localises to the cytoplasm. Component of the integrator complex, a multiprotein complex that terminates RNA polymerase II (Pol II) transcription in the promoter-proximal region of genes. The integrator complex provides a quality checkpoint during transcription elongation by driving premature transcription termination of transcripts that are unfavorably configured for transcriptional elongation: the complex terminates transcription by (1) catalyzing dephosphorylation of the C-terminal domain (CTD) of Pol II subunit POLR2A/RPB1 and SUPT5H/SPT5, (2) degrading the exiting nascent RNA transcript via endonuclease activity and (3) promoting the release of Pol II from bound DNA. The integrator complex is also involved in terminating the synthesis of non-coding Pol II transcripts, such as enhancer RNAs (eRNAs), small nuclear RNAs (snRNAs), telomerase RNAs and long non-coding RNAs (lncRNAs). In Gallus gallus (Chicken), this protein is Integrator complex subunit 2 (INTS2).